We begin with the raw amino-acid sequence, 603 residues long: Cdc42-interacting protein 4 (603 aa).

Residues 1–117 (MDWGTELWDQ…EMKQERKMHF (117 aa)) are required for podosome formation and interaction with AKAP9 and microtubules. The required for translocation to the plasma membrane in response to insulin stretch occupies residues 1 to 117 (MDWGTELWDQ…EMKQERKMHF (117 aa)). The region spanning 1–264 (MDWGTELWDQ…AAESVDAKND (264 aa)) is the F-BAR domain. Residues 67–259 (FSQQQSFVQL…EGMKVAAESV (193 aa)) adopt a coiled-coil conformation. The segment at 293–539 (RVPSDSSLGT…YTEFDEDFEE (247 aa)) is interaction with CDC42. Residues 293 to 603 (RVPSDSSLGT…PTSYLRVTLN (311 aa)) are interaction with PDE6G. Positions 295–358 (PSDSSLGTPD…PSSPRSGRDP (64 aa)) are disordered. Phosphoserine is present on residues serine 296, serine 298, and serine 299. Residues 316–329 (SRAKRWPFGKKNKP) show a composition bias toward basic residues. The span at 333–346 (SLSLLGGHLPSTLS) shows a compositional bias: low complexity. Serine 335 and serine 351 each carry phosphoserine. The stretch at 388–481 (TEDFSHLPPE…ESRVLSNRGD (94 aa)) forms a coiled coil. The 78-residue stretch at 393 to 470 (HLPPEQQRKR…VQKYEAWLAE (78 aa)) folds into the REM-1 domain. Positions 471-603 (AESRVLSNRG…PTSYLRVTLN (133 aa)) are required for interaction with FASLG and localization to lysosomes. A disordered region spans residues 477 to 541 (SNRGDSLSRH…EFDEDFEEPA (65 aa)). Position 482 is a phosphoserine (serine 482). The interval 487–543 (ARPPDPPTTAPPDSSSSSTNSGSQDNKESSSEEPPSEGQDTPIYTEFDEDFEEPASP) is interaction with DNM2 and WASL. Over residues 497 to 510 (PPDSSSSSTNSGSQ) the composition is skewed to low complexity. An interaction with DNM1 and WASL region spans residues 532-603 (EFDEDFEEPA…PTSYLRVTLN (72 aa)). The interval 540–603 (PASPIGQCVA…PTSYLRVTLN (64 aa)) is required for podosome formation. In terms of domain architecture, SH3 spans 542–603 (SPIGQCVAIY…PTSYLRVTLN (62 aa)). Residues 546-603 (QCVAIYHFEGSSEGTVSMSEGEDLSLMEEDKGDGWTRVRRKQGAEGYVPTSYLRVTLN) form an interaction with WAS region. The interval 548-603 (VAIYHFEGSSEGTVSMSEGEDLSLMEEDKGDGWTRVRRKQGAEGYVPTSYLRVTLN) is interaction with ARHGAP17, DAAM1, DIAPH1 and DIAPH2.

It belongs to the FNBP1 family. In terms of assembly, homodimerizes, the dimers can polymerize end-to-end to form filamentous structures. Interacts with AKAP9, ARHGAP17, DAAM1, DIAPH1, DIAPH2, DNM1, FASLG/FASL, GAPVD1, LYN, microtubules, PDE6G, SRC and WAS/WASP. Interacts with the ligand binding domain of the thyroid receptor (TR) in the presence of thyroid hormone. May interact with CTNNB1 and HD/HTT. Interacts specifically with GTP-bound CDC42 and RHOQ. Interacts with DNM2 and WASL. Post-translationally, tyrosine phosphorylated. Also phosphorylated by PKA.

The protein localises to the cytoplasm. It is found in the cytoskeleton. Its subcellular location is the cell cortex. It localises to the lysosome. The protein resides in the golgi apparatus. The protein localises to the cell membrane. It is found in the cell projection. Its subcellular location is the phagocytic cup. Functionally, required to coordinate membrane tubulation with reorganization of the actin cytoskeleton during endocytosis. Binds to lipids such as phosphatidylinositol 4,5-bisphosphate and phosphatidylserine and promotes membrane invagination and the formation of tubules. Also promotes CDC42-induced actin polymerization by recruiting WASL/N-WASP which in turn activates the Arp2/3 complex. Actin polymerization may promote the fission of membrane tubules to form endocytic vesicles. Required for the formation of podosomes, actin-rich adhesion structures specific to monocyte-derived cells. May be required for the lysosomal retention of FASLG/FASL. Required for translocation of GLUT4 to the plasma membrane in response to insulin signaling. The protein is Cdc42-interacting protein 4 (Trip10) of Mus musculus (Mouse).